Consider the following 374-residue polypeptide: Actin-related protein 2/3 complex subunit 2B (374 aa).

Belongs to the ARPC2 family. Component of the Arp2/3 complex composed of ARP2, ARP3, ARPC1/p41-ARC, ARPC2/p34-ARC, ARPC3/p21-ARC, ARPC4/p20-ARC and ARPC5/p16-ARC. In terms of tissue distribution, expressed at low levels in all tissues with a relatively highest expression in inflorescences.

The protein localises to the cytoplasm. It localises to the cytoskeleton. It is found in the cell projection. In terms of biological role, functions as actin-binding component of the Arp2/3 complex which is involved in regulation of actin polymerization and together with an activating nucleation-promoting factor (NPF) mediates the formation of branched actin networks. Seems to contact the mother actin filament. Arp2/3 complex plays a critical role in the control of cell morphogenesis via the modulation of cell polarity development. The chain is Actin-related protein 2/3 complex subunit 2B (ARPC2B) from Arabidopsis thaliana (Mouse-ear cress).